We begin with the raw amino-acid sequence, 887 residues long: Probable dual specificity protein kinase madd-3 (887 aa).

Disordered regions lie at residues 77-147 (PIKS…ISAA), 163-299 (AQPP…PKAL), 313-333 (LPQSSNQNTDDGQQPTTSTGG), 347-475 (TTIC…KSAA), and 504-533 (RKPSRSGLQASQARPKVPEIVSSQRTQHQD). Low complexity predominate over residues 108–118 (PTQNPVQLPLP). Over residues 121–130 (VSEKPGDKKS) the composition is skewed to basic and acidic residues. Positions 177 to 192 (SETNSGSGPVSKQVSG) are enriched in polar residues. The span at 217 to 241 (SSASTRAKAASAVAPEANPAPVPTA) shows a compositional bias: low complexity. Composition is skewed to polar residues over residues 314 to 332 (PQSSNQNTDDGQQPTTSTG) and 356 to 366 (NVPSTSQPQQG). Residues 367–377 (DNEKRLIEKKL) are compositionally biased toward basic and acidic residues. Residues 407–419 (LSSNLTTTNNNNN) are compositionally biased toward low complexity. The segment covering 439 to 462 (FSTQAGSGNATTVDDPASTTTSKE) has biased composition (polar residues). The 313-residue stretch at 551–863 (FTIYDTLGEG…LPEALQHRYF (313 aa)) folds into the Protein kinase domain. Residues 557–565 (LGEGTFGKV) and K580 each bind ATP. Residue D677 is the Proton acceptor of the active site.

It belongs to the protein kinase superfamily. CMGC Ser/Thr protein kinase family. Lammer subfamily. In terms of tissue distribution, expressed in body wall, vulval and anal depressor muscles.

Its subcellular location is the cytoplasm. The protein resides in the nucleus. In terms of biological role, probable dual specificity kinase acting on both serine/threonine and tyrosine-containing substrates. Negatively regulates p38 MAPK signaling to allow for the plasma membrane of body wall muscle cells to form projections, also called muscle arms, that extend and connect the body wall muscles to target motor neurons. Negative regulation of p38 MAPK signaling may in turn modulate the trafficking of the muscle specific receptor eva-1 to the lysosome, to ensure proper display of the eva-1 receptor on the plasma membrane of muscle cells and allow for muscle arm extension towards guidance cues. The polypeptide is Probable dual specificity protein kinase madd-3 (Caenorhabditis elegans).